The sequence spans 294 residues: Cytidine deaminase (294 aa).

CMP/dCMP-type deaminase domains are found at residues Asp-48–Lys-168 and Leu-186–Gly-294. Asn-89–Glu-91 contributes to the substrate binding site. His-102 lines the Zn(2+) pocket. Glu-104 acts as the Proton donor in catalysis. Zn(2+) is bound by residues Cys-129 and Cys-132.

This sequence belongs to the cytidine and deoxycytidylate deaminase family. Homodimer. The cofactor is Zn(2+).

The enzyme catalyses cytidine + H2O + H(+) = uridine + NH4(+). It catalyses the reaction 2'-deoxycytidine + H2O + H(+) = 2'-deoxyuridine + NH4(+). Functionally, this enzyme scavenges exogenous and endogenous cytidine and 2'-deoxycytidine for UMP synthesis. The sequence is that of Cytidine deaminase from Salmonella dublin (strain CT_02021853).